A 327-amino-acid chain; its full sequence is Cyclic AMP-responsive element-binding protein 1 (327 aa).

2 disordered regions span residues 1–27 and 94–113; these read MTME…QMTV and SEDS…RREI. Positions 87-146 constitute a KID domain; that stretch reads QISTIAESEDSQESVDSVTDSQKRREILSRRPSYRKILNDLSSDAPGVPRIEEEKSEEET. S119 bears the Phosphoserine; by CaMK1, CaMK2, CaMK4, PKB/AKT1 or PKB/AKT2, RPS6KA3, RPS6KA4, RPS6KA5 and SGK1 mark. A Glycyl lysine isopeptide (Lys-Gly) (interchain with G-Cter in SUMO2) cross-link involves residue K122. Positions 126 to 151 are disordered; that stretch reads DLSSDAPGVPRIEEEKSEEETSAPAI. S128 is modified (phosphoserine; by CaMK2). Position 257 is a phosphoserine; by HIPK2 (S257). The region spanning 269–327 is the bZIP domain; sequence ARKREVRLMKNREAARECRRKKKEYVKCLENRVAVLENQNKTLIEELKALKDLYCHKSD. Residues 270-295 are basic motif; the sequence is RKREVRLMKNREAARECRRKKKEYVK. Residues K271 and K290 each participate in a glycyl lysine isopeptide (Lys-Gly) (interchain with G-Cter in SUMO1) cross-link. Positions 297–318 are leucine-zipper; the sequence is LENRVAVLENQNKTLIEELKAL.

This sequence belongs to the bZIP family. In terms of assembly, interacts with PPRC1. Binds DNA as a dimer. This dimer is stabilized by magnesium ions. Interacts, through the bZIP domain, with the coactivators CRTC1/TORC1, CRTC2/TORC2 and CRTC3/TORC3. Interacts (phosphorylated form) with TOX3. When phosphorylated on Ser-119, binds CREBBP. Interacts with ARRB1. Binds to HIPK2. Interacts with SGK1. Interacts with CREBL2; regulates CREB1 phosphorylation, stability and transcriptional activity. Interacts with TSSK4; this interaction facilitates phosphorylation on Ser-119. Forms a complex with KMT2A and CREBBP. Interacts with TOX4; CREB1 is required for full induction of TOX4-dependent activity and the interaction is increased by cAMP and inhibited by insulin. Post-translationally, phosphorylation of Ser-119 allows CREBBP binding. Stimulated by phosphorylation. Phosphorylated Ser-128 can be detected in the suprachiasmatic nucleus (SCN), the amygdala, the cortex, and the hippocampus but not in the striatum nor in the cerebellum. In the SCN, phosphorylation of Ser-128 and Ser-119 are stimulated by light exposure and submitted to circadian oscillations. In the retina, only phosphorylation of Ser-119 can be detected upon light exposure. Phosphorylation of both Ser-119 and Ser-128 in the SCN regulates the activity of CREB and participates in circadian rhythm generation. Phosphorylated upon calcium influx by CaMK4 and CaMK2 on Ser-119. CaMK4 is much more potent than CAMK2 in activating CREB. Phosphorylated by CaMK2 on Ser-128. Phosphorylation of Ser-128 blocks CREB-mediated transcription even when Ser-119 is phosphorylated. Phosphorylated by CaMK1. Phosphorylation of Ser-271 by HIPK2 in response to genotoxic stress promotes CREB1 activity, facilitating the recruitment of the coactivator CBP. Phosphorylated at Ser-119 by RPS6KA3, RPS6KA4 and RPS6KA5 in response to mitogenic or stress stimuli. CREBL2 positively regulates phosphorylation at Ser-119 thereby stimulating CREB1 transcriptional activity. In liver, phosphorylation is induced by fasting or glucagon in a circadian fashion. Phosphorylated by TSSK4 on Ser-119. Sumoylated with SUMO1. Sumoylation on Lys-290, but not on Lys-271, is required for nuclear localization of this protein. Sumoylation is enhanced under hypoxia, promoting nuclear localization and stabilization. Expressed in the heart (at protein level).

It is found in the nucleus. In terms of biological role, phosphorylation-dependent transcription factor that stimulates transcription upon binding to the DNA cAMP response element (CRE), a sequence present in many viral and cellular promoters. Transcription activation is enhanced by the TORC coactivators which act independently of Ser-119 phosphorylation. Involved in different cellular processes including the synchronization of circadian rhythmicity and the differentiation of adipose cells. Regulates the expression of apoptotic and inflammatory response factors in cardiomyocytes in response to ERFE-mediated activation of AKT signaling. The protein is Cyclic AMP-responsive element-binding protein 1 (Creb1) of Mus musculus (Mouse).